Consider the following 674-residue polypeptide: Xaa-Pro aminopeptidase 2 (674 aa).

Residues 1-21 (MARAHWGCCPWLVLLCACAWG) form the signal peptide. Residues N35, N49, and N65 are each glycosylated (N-linked (GlcNAc...) asparagine). R116 provides a ligand contact to substrate. Residues N278 and N291 are each glycosylated (N-linked (GlcNAc...) asparagine). H430 contacts substrate. D450, D461, and H524 together coordinate Zn(2+). Substrate contacts are provided by H524, H533, and E555. 2 residues coordinate Zn(2+): E555 and E569. A lipid anchor (GPI-anchor amidated alanine) is attached at A649. A propeptide spans 650–674 (ARAPDTASWASVLVVSTLAILGWSV) (removed in mature form).

The protein belongs to the peptidase M24B family. Homotrimer. Zn(2+) serves as cofactor. In terms of processing, N-glycosylated. Expressed in kidney, lung, heart, placenta, liver, small intestine and colon. No expression in brain, skeletal muscle, pancreas, spleen, thymus, prostate, testis and ovary.

It is found in the cell membrane. It catalyses the reaction Release of any N-terminal amino acid, including proline, that is linked to proline, even from a dipeptide or tripeptide.. Its activity is regulated as follows. Inhibited by apstatin and the chelating agent 1,10-phenanthroline. Also inhibited by high concentrations of Zn(2+). Not significantly inhibited by bestatin or phosphoramidon. Membrane-bound metalloprotease which catalyzes the removal of a penultimate prolyl residue from the N-termini of peptides, such as Arg-Pro-Pro. May play a role in the metabolism of the vasodilator bradykinin. In Homo sapiens (Human), this protein is Xaa-Pro aminopeptidase 2 (XPNPEP2).